The sequence spans 131 residues: uncharacterized protein (131 aa).

Positions 1 to 16 (MDVLFVAIFAVPLILG) are cleaved as a signal peptide.

The protein resides in the secreted. This is an uncharacterized protein from Homo sapiens (Human).